The primary structure comprises 434 residues: ATP-dependent protease ATPase subunit HslU (434 aa).

Residues Val18, 60-65 (GVGKTE), Asp247, Glu312, and Arg384 contribute to the ATP site.

Belongs to the ClpX chaperone family. HslU subfamily. In terms of assembly, a double ring-shaped homohexamer of HslV is capped on each side by a ring-shaped HslU homohexamer. The assembly of the HslU/HslV complex is dependent on binding of ATP.

Its subcellular location is the cytoplasm. Functionally, ATPase subunit of a proteasome-like degradation complex; this subunit has chaperone activity. The binding of ATP and its subsequent hydrolysis by HslU are essential for unfolding of protein substrates subsequently hydrolyzed by HslV. HslU recognizes the N-terminal part of its protein substrates and unfolds these before they are guided to HslV for hydrolysis. This Bradyrhizobium sp. (strain ORS 278) protein is ATP-dependent protease ATPase subunit HslU.